The following is a 362-amino-acid chain: Homoserine O-acetyltransferase FUB5 (362 aa).

The AB hydrolase-1 domain occupies 12–335 (NVMIICHALS…VSDDGHDAFL (324 aa)). S110 acts as the Nucleophile in catalysis. The disordered stretch occupies residues 195–232 (RFGRDTGNKKKTQQQDSKTIPNNGTPIHSQGGADETPV). Polar residues predominate over residues 208-222 (QQDSKTIPNNGTPIH). Residues D302 and H331 contribute to the active site.

It belongs to the AB hydrolase superfamily. MetX family.

The enzyme catalyses L-homoserine + acetyl-CoA = O-acetyl-L-homoserine + CoA. Its pathway is mycotoxin biosynthesis. In terms of biological role, homoserine O-acetyltransferase; part of the gene cluster that mediates the biosynthesis of fusaric acid, a mycotoxin with low to moderate toxicity to animals and humans, but with high phytotoxic properties. L-aspartate is suggested as fusaric acid amino acid precursor that is activated and further processed to O-acetyl-L-homoserine by cluster enzymes aspartate kinase FUB3 and homoserine O-acetyltransferase FUB5, as well as enzymes of the primary metabolism. The polyketide synthase (PKS) FUB1 generates the triketide trans-2-hexenal which is presumptively released by the hydrolase FUB4 and linked to the NRPS-bound amino acid precursor by NAD(P)-dependent dehydrogenase FUB6. FUB1, FUB4, and the non-canonical NRPS Fub8 may form an enzyme complex. Further processing of the NRPS-bound intermediate might be carried out by FUB6 and the O-acetylhomoserine FUB7, enabling a spontaneous electrocyclization to close the carbon backbone of fusaric acid. Dihydrofusaric acid is likely to be released via reduction by the thioester reductase (TR) domain of FUB8 whereupon the final oxidation to fusaric acid may (also) be performed by the FMN-dependent dehydrogenase FUB9. This chain is Homoserine O-acetyltransferase FUB5, found in Fusarium oxysporum f. sp. lycopersici (strain 4287 / CBS 123668 / FGSC 9935 / NRRL 34936) (Fusarium vascular wilt of tomato).